The primary structure comprises 415 residues: Homoserine O-acetyltransferase (415 aa).

The AB hydrolase-1 domain occupies 47 to 369; sequence NAVLVCHGLT…HGHDAFLVEP (323 aa). Ser155 functions as the Nucleophile in the catalytic mechanism. Arg226 contributes to the substrate binding site. Residues Asp329 and His362 contribute to the active site. Asp363 provides a ligand contact to substrate. The segment at 387 to 415 is disordered; that stretch reads RAVTDTATDGGEPDEEKDFAPVHSSLFSR.

It belongs to the AB hydrolase superfamily. MetX family. Homodimer.

It is found in the cytoplasm. It carries out the reaction L-homoserine + acetyl-CoA = O-acetyl-L-homoserine + CoA. It functions in the pathway amino-acid biosynthesis; L-methionine biosynthesis via de novo pathway; O-acetyl-L-homoserine from L-homoserine: step 1/1. Transfers an acetyl group from acetyl-CoA to L-homoserine, forming acetyl-L-homoserine. The chain is Homoserine O-acetyltransferase from Haloferax gibbonsii (strain ATCC 33959 / DSM 4427 / JCM 8863 / NBRC 102184 / NCIMB 2188 / Ma 2.38).